A 61-amino-acid chain; its full sequence is Aerolysin regulatory protein (61 aa).

Residues 1 to 14 (MMIKRHLPQPRHRE) show a composition bias toward basic residues. Positions 1–61 (MMIKRHLPQP…GQTHTGPQIR (61 aa)) are disordered. Residues 51–61 (DGQTHTGPQIR) show a composition bias toward polar residues.

Functionally, regulation of the expression of aerolysin. In Aeromonas sobria, this protein is Aerolysin regulatory protein (aerC).